The sequence spans 120 residues: MVVNIYDTANELERQMRQTQEFIGLKEAFDDLKADKEATDLFVKFQAKQAAAQQKQMQGQEISEDEIKEIQALAKDVTSKDVIQALMAKEQQVDQMIQQLNQIITGPLQELYKQFGPQEG.

This sequence belongs to the UPF0342 family.

In Limosilactobacillus fermentum (strain NBRC 3956 / LMG 18251) (Lactobacillus fermentum), this protein is UPF0342 protein LAF_1331.